We begin with the raw amino-acid sequence, 157 residues long: Small ribosomal subunit protein uS9 (157 aa).

This sequence belongs to the universal ribosomal protein uS9 family.

In Caulobacter vibrioides (strain ATCC 19089 / CIP 103742 / CB 15) (Caulobacter crescentus), this protein is Small ribosomal subunit protein uS9.